We begin with the raw amino-acid sequence, 244 residues long: Small ribosomal subunit protein uS3 (244 aa).

One can recognise a KH type-2 domain in the interval 39-110; it reads IRDYVRKNLS…QIRINVIEVE (72 aa). Residues 215–244 form a disordered region; it reads EDAAPSNVGQPRRRNQQRRRQQFEDRSNEG. The span at 225–234 shows a compositional bias: basic residues; it reads PRRRNQQRRR. Residues 235 to 244 show a composition bias toward basic and acidic residues; that stretch reads QQFEDRSNEG.

This sequence belongs to the universal ribosomal protein uS3 family. Part of the 30S ribosomal subunit. Forms a tight complex with proteins S10 and S14.

In terms of biological role, binds the lower part of the 30S subunit head. Binds mRNA in the 70S ribosome, positioning it for translation. The protein is Small ribosomal subunit protein uS3 of Synechococcus sp. (strain ATCC 27144 / PCC 6301 / SAUG 1402/1) (Anacystis nidulans).